The sequence spans 139 residues: S-adenosylmethionine decarboxylase proenzyme (139 aa).

Ser63 functions as the Schiff-base intermediate with substrate; via pyruvic acid in the catalytic mechanism. The residue at position 63 (Ser63) is a Pyruvic acid (Ser); by autocatalysis. The active-site Proton acceptor; for processing activity is the His68. The Proton donor; for catalytic activity role is filled by Cys83.

Belongs to the prokaryotic AdoMetDC family. Type 1 subfamily. Heterotetramer of two alpha and two beta chains arranged as a dimer of alpha/beta heterodimers. Pyruvate serves as cofactor. Post-translationally, is synthesized initially as an inactive proenzyme. Formation of the active enzyme involves a self-maturation process in which the active site pyruvoyl group is generated from an internal serine residue via an autocatalytic post-translational modification. Two non-identical subunits are generated from the proenzyme in this reaction, and the pyruvate is formed at the N-terminus of the alpha chain, which is derived from the carboxyl end of the proenzyme. The post-translation cleavage follows an unusual pathway, termed non-hydrolytic serinolysis, in which the side chain hydroxyl group of the serine supplies its oxygen atom to form the C-terminus of the beta chain, while the remainder of the serine residue undergoes an oxidative deamination to produce ammonia and the pyruvoyl group blocking the N-terminus of the alpha chain.

The catalysed reaction is S-adenosyl-L-methionine + H(+) = S-adenosyl 3-(methylsulfanyl)propylamine + CO2. It participates in amine and polyamine biosynthesis; S-adenosylmethioninamine biosynthesis; S-adenosylmethioninamine from S-adenosyl-L-methionine: step 1/1. Functionally, catalyzes the decarboxylation of S-adenosylmethionine to S-adenosylmethioninamine (dcAdoMet), the propylamine donor required for the synthesis of the polyamines spermine and spermidine from the diamine putrescine. The chain is S-adenosylmethionine decarboxylase proenzyme from Pyrococcus abyssi (strain GE5 / Orsay).